We begin with the raw amino-acid sequence, 147 residues long: MDTLTAIGRWLAKQHVVTWCVHHEGELWCANAFYLFDAQNVALYLLTDDKTRHAQMSGACAPVAGTVNGQPKTVARIRGVQFKGEIRRLEGQESDAVRKAYLRRFPVARVLPAPVWEIRLDEIKFTDNTLGFGKKLHWLRDSRAQQA.

This sequence belongs to the UPF0306 family.

The sequence is that of UPF0306 protein YhbP from Salmonella choleraesuis (strain SC-B67).